The sequence spans 308 residues: Porphobilinogen deaminase (308 aa).

Position 240 is an S-(dipyrrolylmethanemethyl)cysteine (C240).

The protein belongs to the HMBS family. Monomer. Dipyrromethane is required as a cofactor.

It catalyses the reaction 4 porphobilinogen + H2O = hydroxymethylbilane + 4 NH4(+). The protein operates within porphyrin-containing compound metabolism; protoporphyrin-IX biosynthesis; coproporphyrinogen-III from 5-aminolevulinate: step 2/4. Its function is as follows. Tetrapolymerization of the monopyrrole PBG into the hydroxymethylbilane pre-uroporphyrinogen in several discrete steps. In Laribacter hongkongensis (strain HLHK9), this protein is Porphobilinogen deaminase.